The following is a 32-amino-acid chain: Corticostatin-related peptide RK-1 (32 aa).

Intrachain disulfides connect C3–C29, C5–C19, and C9–C28.

It is found in the secreted. Functionally, has antimicrobial activity against E.coli and activates ion channel activity. This is Corticostatin-related peptide RK-1 from Oryctolagus cuniculus (Rabbit).